A 385-amino-acid polypeptide reads, in one-letter code: Putative actin-25 (385 aa).

It belongs to the actin family.

It is found in the cytoplasm. It localises to the cytoskeleton. The enzyme catalyses ATP + H2O = ADP + phosphate + H(+). Functionally, actins are highly conserved proteins that are involved in various types of cell motility and are ubiquitously expressed in all eukaryotic cells. Multiple isoforms are involved in various cellular functions such as cytoskeleton structure, cell mobility, chromosome movement and muscle contraction. In Dictyostelium discoideum (Social amoeba), this protein is Putative actin-25 (act25).